The following is a 541-amino-acid chain: Atlastin (541 aa).

The Cytoplasmic portion of the chain corresponds to 1 to 424 (MGGSAVQVIN…NIFKAARTPA (424 aa)). One can recognise a GB1/RHD3-type G domain in the interval 35–284 (DRFVCVVSVA…LVPMLLAPDN (250 aa)). R48, K49, G50, K51, and S52 together coordinate GDP. GTP contacts are provided by R48, K49, G50, K51, S52, and F53. S52 is a Mg(2+) binding site. A Mg(2+)-binding site is contributed by D121. The GDP site is built by R192, D193, and V251. Positions 192, 193, and 251 each coordinate GTP. The interval 322-413 (MLVATAEANH…FTNYQAHNES (92 aa)) is 3HB (three-helix bundle) domain. Positions 414 to 422 (KNIFKAART) are linker. Residues 425 to 445 (VYFACAVIMYILSGIFGLVGL) traverse the membrane as a helical segment. Topologically, residues 446–448 (YTF) are lumenal. Residues 449 to 469 (ANFCNLVMGVALLTLALWAYI) form a helical membrane-spanning segment. The Cytoplasmic segment spans residues 470–541 (RYSGELSDFG…NASNGKVKRS (72 aa)). T514 is modified (phosphothreonine).

It belongs to the TRAFAC class dynamin-like GTPase superfamily. GB1/RHD3 GTPase family. GB1 subfamily. As to quaternary structure, monomeric and homodimeric. The homodimer, transiently formed by two molecules on opposing membranes, is the active form mediating ER membrane fusion. Interacts with spas; interaction may regulate microtubule dynamics. As to expression, ubiquitously expressed.

The protein localises to the endoplasmic reticulum membrane. Its subcellular location is the golgi apparatus membrane. It carries out the reaction GTP + H2O = GDP + phosphate + H(+). In terms of biological role, membrane-anchored GTPase that mediates the GTP-dependent fusion of endoplasmic reticulum (ER) membranes, maintaining the continuous ER network. It facilitates the formation of three-way junctions where ER tubules intersect. Two atlastin-1 on neighboring ER tubules bind GTP and form loose homodimers through the GB1/RHD3-type G domains and 3HB regions. Upon GTP hydrolysis, the 3HB regions tighten, pulling the membranes together to drive their fusion. After fusion, the homodimer disassembles upon release of inorganic phosphate (Pi). Subsequently, GDP dissociates, resetting the monomers to a conformation ready for a new fusion cycle. May also regulate more or less directly Golgi biogenesis. May also regulate microtubule polymerization and Golgi biogenesis. Required for dopaminergic neurons survival and the growth of muscles and synapses at neuromuscular junctions. This chain is Atlastin (atl), found in Drosophila melanogaster (Fruit fly).